The sequence spans 872 residues: Bifunctional uridylyltransferase/uridylyl-removing enzyme (872 aa).

A uridylyltransferase region spans residues 1-332; sequence MALPNKVKKL…PKHHQPIIQE (332 aa). The interval 333–691 is uridylyl-removing; that stretch reads LDRNFERIGN…VSNKAMHGGT (359 aa). An HD domain is found at 450 to 572; the sequence is VDEHTHRLIN…VKTERQLDYL (123 aa). ACT domains follow at residues 692 to 773 and 799 to 872; these read QVFV…FKKN and LIEI…AETE.

The protein belongs to the GlnD family. Mg(2+) serves as cofactor.

It catalyses the reaction [protein-PII]-L-tyrosine + UTP = [protein-PII]-uridylyl-L-tyrosine + diphosphate. The enzyme catalyses [protein-PII]-uridylyl-L-tyrosine + H2O = [protein-PII]-L-tyrosine + UMP + H(+). Uridylyltransferase (UTase) activity is inhibited by glutamine, while glutamine activates uridylyl-removing (UR) activity. Functionally, modifies, by uridylylation and deuridylylation, the PII regulatory proteins (GlnB and homologs), in response to the nitrogen status of the cell that GlnD senses through the glutamine level. Under low glutamine levels, catalyzes the conversion of the PII proteins and UTP to PII-UMP and PPi, while under higher glutamine levels, GlnD hydrolyzes PII-UMP to PII and UMP (deuridylylation). Thus, controls uridylylation state and activity of the PII proteins, and plays an important role in the regulation of nitrogen assimilation and metabolism. The chain is Bifunctional uridylyltransferase/uridylyl-removing enzyme from Pseudoalteromonas translucida (strain TAC 125).